The primary structure comprises 37 residues: Antifungal protein S (37 aa).

It belongs to the thaumatin family.

In terms of biological role, has antifungal activity. Inhibits the growth of Trichoderma viridae and Candida albicans. The sequence is that of Antifungal protein S from Hordeum vulgare (Barley).